The primary structure comprises 239 residues: Fatty acid metabolism regulator protein (239 aa).

One can recognise an HTH gntR-type domain in the interval 6-74 (QSPAGFAEEY…HGKPTKVNNF (69 aa)). Residues 34–53 (ERELSELIGVTRTTLREVLQ) constitute a DNA-binding region (H-T-H motif).

In terms of assembly, homodimer.

Its subcellular location is the cytoplasm. Functionally, multifunctional regulator of fatty acid metabolism. This chain is Fatty acid metabolism regulator protein, found in Yersinia enterocolitica serotype O:8 / biotype 1B (strain NCTC 13174 / 8081).